The primary structure comprises 236 residues: Small ribosomal subunit protein uS2c (236 aa).

This sequence belongs to the universal ribosomal protein uS2 family.

The protein resides in the plastid. It is found in the chloroplast. In Coffea arabica (Arabian coffee), this protein is Small ribosomal subunit protein uS2c (rps2).